A 786-amino-acid chain; its full sequence is Endonuclease MutS2 (786 aa).

335–342 contributes to the ATP binding site; the sequence is GPNTGGKT. The Smr domain occupies 711-786; sequence LDLRGERFEN…GLGVTVVELK (76 aa).

This sequence belongs to the DNA mismatch repair MutS family. MutS2 subfamily. Homodimer. Binds to stalled ribosomes, contacting rRNA.

Its function is as follows. Endonuclease that is involved in the suppression of homologous recombination and thus may have a key role in the control of bacterial genetic diversity. In terms of biological role, acts as a ribosome collision sensor, splitting the ribosome into its 2 subunits. Detects stalled/collided 70S ribosomes which it binds and splits by an ATP-hydrolysis driven conformational change. Acts upstream of the ribosome quality control system (RQC), a ribosome-associated complex that mediates the extraction of incompletely synthesized nascent chains from stalled ribosomes and their subsequent degradation. Probably generates substrates for RQC. The polypeptide is Endonuclease MutS2 (Bacillus cytotoxicus (strain DSM 22905 / CIP 110041 / 391-98 / NVH 391-98)).